Here is a 650-residue protein sequence, read N- to C-terminus: 1-deoxy-D-xylulose-5-phosphate synthase 2 (650 aa).

Thiamine diphosphate contacts are provided by residues histidine 79 and 120 to 122 (AHS). Position 151 (aspartate 151) interacts with Mg(2+). Thiamine diphosphate is bound by residues 152–153 (GS), asparagine 180, tyrosine 289, and glutamate 371. Asparagine 180 is a Mg(2+) binding site.

The protein belongs to the transketolase family. DXPS subfamily. Homodimer. Requires Mg(2+) as cofactor. Thiamine diphosphate serves as cofactor.

It carries out the reaction D-glyceraldehyde 3-phosphate + pyruvate + H(+) = 1-deoxy-D-xylulose 5-phosphate + CO2. It participates in metabolic intermediate biosynthesis; 1-deoxy-D-xylulose 5-phosphate biosynthesis; 1-deoxy-D-xylulose 5-phosphate from D-glyceraldehyde 3-phosphate and pyruvate: step 1/1. Functionally, catalyzes the acyloin condensation reaction between C atoms 2 and 3 of pyruvate and glyceraldehyde 3-phosphate to yield 1-deoxy-D-xylulose-5-phosphate (DXP). The sequence is that of 1-deoxy-D-xylulose-5-phosphate synthase 2 from Zymomonas mobilis subsp. mobilis (strain ATCC 31821 / ZM4 / CP4).